The chain runs to 49 residues: Small, acid-soluble spore protein O (49 aa).

The segment at 1 to 49 (MGKRKANHTISGMNAASAQGQGTGYNEEFANEPFTPAERQNNKKRKKNQ) is disordered. Over residues 8 to 20 (HTISGMNAASAQG) the composition is skewed to polar residues.

The protein belongs to the SspO family.

Its subcellular location is the spore core. This is Small, acid-soluble spore protein O from Bacillus cereus (strain ATCC 14579 / DSM 31 / CCUG 7414 / JCM 2152 / NBRC 15305 / NCIMB 9373 / NCTC 2599 / NRRL B-3711).